Consider the following 107-residue polypeptide: Theromyzin (107 aa).

The N-terminal stretch at 1-21 (MHAKIILALFLGMTAFLAVQA) is a signal peptide.

Coelomic liquid (at protein level). Expressed in large fat cells in contact with coelomic cavities, in intestinal epithelia and at the epidermis level.

The protein resides in the secreted. In terms of biological role, has bacteriostatic activity against M.luteus. No activity toward E.coli and F.oxysporum. This chain is Theromyzin, found in Theromyzon tessulatum (Duck leech).